Reading from the N-terminus, the 375-residue chain is Dual-specificity RNA methyltransferase RlmN (375 aa).

The active-site Proton acceptor is the Glu-94. One can recognise a Radical SAM core domain in the interval 100 to 339; sequence EDDRATLCVS…VTVRKTRGDD (240 aa). The cysteines at positions 107 and 344 are disulfide-linked. 3 residues coordinate [4Fe-4S] cluster: Cys-114, Cys-118, and Cys-121. Residues 168 to 169, Ser-200, 222 to 224, and Asn-301 each bind S-adenosyl-L-methionine; these read GE and SLH. The S-methylcysteine intermediate role is filled by Cys-344.

The protein belongs to the radical SAM superfamily. RlmN family. It depends on [4Fe-4S] cluster as a cofactor.

The protein localises to the cytoplasm. It carries out the reaction adenosine(2503) in 23S rRNA + 2 reduced [2Fe-2S]-[ferredoxin] + 2 S-adenosyl-L-methionine = 2-methyladenosine(2503) in 23S rRNA + 5'-deoxyadenosine + L-methionine + 2 oxidized [2Fe-2S]-[ferredoxin] + S-adenosyl-L-homocysteine. The enzyme catalyses adenosine(37) in tRNA + 2 reduced [2Fe-2S]-[ferredoxin] + 2 S-adenosyl-L-methionine = 2-methyladenosine(37) in tRNA + 5'-deoxyadenosine + L-methionine + 2 oxidized [2Fe-2S]-[ferredoxin] + S-adenosyl-L-homocysteine. Functionally, specifically methylates position 2 of adenine 2503 in 23S rRNA and position 2 of adenine 37 in tRNAs. m2A2503 modification seems to play a crucial role in the proofreading step occurring at the peptidyl transferase center and thus would serve to optimize ribosomal fidelity. The sequence is that of Dual-specificity RNA methyltransferase RlmN from Vibrio campbellii (strain ATCC BAA-1116).